Here is a 108-residue protein sequence, read N- to C-terminus: BH3-like motif-containing cell death inducer (108 aa).

The short motif at 5–12 (LPIEGQEI) is the BH3-like element.

In terms of tissue distribution, ubiquitously expressed.

The protein resides in the cytoplasm. It localises to the mitochondrion. In terms of biological role, functions as a proapoptotic molecule through the caspase-dependent mitochondrial pathway of cell death. The polypeptide is BH3-like motif-containing cell death inducer (BLID) (Homo sapiens (Human)).